The following is a 267-amino-acid chain: Glucosamine-6-phosphate deaminase (267 aa).

The active-site Proton acceptor; for enolization step is D72. Residue D141 is the For ring-opening step of the active site. H143 serves as the catalytic Proton acceptor; for ring-opening step. The active-site For ring-opening step is the E148.

Belongs to the glucosamine/galactosamine-6-phosphate isomerase family. NagB subfamily. In terms of assembly, homohexamer.

The enzyme catalyses alpha-D-glucosamine 6-phosphate + H2O = beta-D-fructose 6-phosphate + NH4(+). The protein operates within amino-sugar metabolism; N-acetylneuraminate degradation; D-fructose 6-phosphate from N-acetylneuraminate: step 5/5. Its activity is regulated as follows. Allosterically activated by N-acetylglucosamine 6-phosphate (GlcNAc6P). Catalyzes the reversible isomerization-deamination of glucosamine 6-phosphate (GlcN6P) to form fructose 6-phosphate (Fru6P) and ammonium ion. The sequence is that of Glucosamine-6-phosphate deaminase from Mannheimia succiniciproducens (strain KCTC 0769BP / MBEL55E).